Here is a 529-residue protein sequence, read N- to C-terminus: Ell-associated factor Eaf (529 aa).

2 disordered regions span residues 155–235 and 253–529; these read AAGS…PMIT and ANIS…DDDD. Residues 167-186 show a composition bias toward polar residues; it reads ENSTMRISSKTKVSTGSRRN. Composition is skewed to low complexity over residues 194-215, 256-265, 306-315, and 327-346; these read RNSP…SPQS, SGSSTGSSSG, HQNQQQQQQN, and QQQH…QQQQ. Serine 196 is modified (phosphoserine). Positions 347 to 359 are enriched in polar residues; the sequence is RASFSHSNHSNSM. Residues 401–416 are compositionally biased toward acidic residues; it reads DSSDTDSGSDSDDSTD. Low complexity-rich tracts occupy residues 431-451, 469-480, 488-499, and 510-523; these read HQQQ…HMHQ, QHQQQQQQPPQQ, QQQQQQQQQQQS, and NDLL…SSNS.

This sequence belongs to the EAF family.

It localises to the nucleus. Its function is as follows. Promotes transcriptional elongation by Su(Tpl)/ELL. Essential for development. The protein is Ell-associated factor Eaf of Drosophila grimshawi (Hawaiian fruit fly).